The sequence spans 124 residues: UPF0231 protein Shewana3_0655 (124 aa).

This sequence belongs to the UPF0231 family.

In Shewanella sp. (strain ANA-3), this protein is UPF0231 protein Shewana3_0655.